Reading from the N-terminus, the 377-residue chain is Peroxisomal membrane protein PEX14 (377 aa).

Residues 1-20 show a composition bias toward low complexity; sequence MASSEQAEQPSQPSSSPGSE. Residues 1-23 form a disordered region; sequence MASSEQAEQPSQPSSSPGSENVV. An N-acetylalanine modification is found at Ala2. The Peroxisomal portion of the chain corresponds to 2–108; the sequence is ASSEQAEQPS…CSPGSSRWRD (107 aa). At Lys34 the chain carries N6-acetyllysine. The chain crosses the membrane as a helical span at residues 109–126; sequence YGALAIIMAGIAFGFHQL. Topologically, residues 127 to 377 are cytoplasmic; the sequence is YKKYLLPLIL…EGASNESERH (251 aa). Residues 230–377 are disordered; that stretch reads PPSPSAPKIP…EGASNESERH (148 aa). Ser232 carries the post-translational modification Phosphoserine. 2 stretches are compositionally biased toward low complexity: residues 244–259 and 265–275; these read PVKSPSPSSPAAVNHH and SPVSNESTSSS. Phosphoserine is present on residues Ser282 and Ser335. Over residues 323-342 the composition is skewed to acidic residues; that stretch reads KEEEEEEEEEDVSHVDEEDV. The span at 360–377 shows a compositional bias: basic and acidic residues; the sequence is QVDKLRRPEGASNESERH.

This sequence belongs to the peroxin-14 family. As to quaternary structure, interacts with PEX13; forming the PEX13-PEX14 docking complex. Interacts with PEX5 (via WxxxF/Y motifs). Interacts with PEX19. Interacts with tubulin.

The protein localises to the peroxisome membrane. Component of the PEX13-PEX14 docking complex, a translocon channel that specifically mediates the import of peroxisomal cargo proteins bound to PEX5 receptor. The PEX13-PEX14 docking complex forms a large import pore which can be opened to a diameter of about 9 nm. Mechanistically, PEX5 receptor along with cargo proteins associates with the PEX14 subunit of the PEX13-PEX14 docking complex in the cytosol, leading to the insertion of the receptor into the organelle membrane with the concomitant translocation of the cargo into the peroxisome matrix. Plays a key role for peroxisome movement through a direct interaction with tubulin. In Cricetulus longicaudatus (Long-tailed dwarf hamster), this protein is Peroxisomal membrane protein PEX14.